The following is a 91-amino-acid chain: UPF0386 protein CC_0226 (91 aa).

It belongs to the UPF0386 family.

The sequence is that of UPF0386 protein CC_0226 from Caulobacter vibrioides (strain ATCC 19089 / CIP 103742 / CB 15) (Caulobacter crescentus).